The sequence spans 179 residues: Large ribosomal subunit protein uL6 (179 aa).

The protein belongs to the universal ribosomal protein uL6 family. As to quaternary structure, part of the 50S ribosomal subunit.

Its function is as follows. This protein binds to the 23S rRNA, and is important in its secondary structure. It is located near the subunit interface in the base of the L7/L12 stalk, and near the tRNA binding site of the peptidyltransferase center. The protein is Large ribosomal subunit protein uL6 of Rhodococcus erythropolis (strain PR4 / NBRC 100887).